We begin with the raw amino-acid sequence, 84 residues long: Small ribosomal subunit protein uS17 (84 aa).

It belongs to the universal ribosomal protein uS17 family. In terms of assembly, part of the 30S ribosomal subunit.

Its function is as follows. One of the primary rRNA binding proteins, it binds specifically to the 5'-end of 16S ribosomal RNA. The protein is Small ribosomal subunit protein uS17 of Clostridium novyi (strain NT).